The primary structure comprises 109 residues: Putative RNase MJ1380 (109 aa).

Active-site residues include Arg76 and His81. Positions Arg76 to Tyr83 match the RX(4)HXY motif motif. O-di-AMP-tyrosine is present on Tyr83.

The protein belongs to the HepT RNase toxin family. In terms of assembly, homodimer, probably forms a complex with cognate antitoxin MJ1379. In terms of processing, modified by cognate antitoxin MJ1379; probably at least 2 successive AMPylation events occur on Tyr-83.

Probable toxic component of a putative type VII toxin-antitoxin (TA) system, probably an RNase. Probably neutralized by cognate antitoxin MJ1379. Neutralization may be due to AMPylation by antitoxin MJ1379. This is Putative RNase MJ1380 from Methanocaldococcus jannaschii (strain ATCC 43067 / DSM 2661 / JAL-1 / JCM 10045 / NBRC 100440) (Methanococcus jannaschii).